The following is a 345-amino-acid chain: Phosphoribosylformylglycinamidine cyclo-ligase (345 aa).

It belongs to the AIR synthase family.

It localises to the cytoplasm. It carries out the reaction 2-formamido-N(1)-(5-O-phospho-beta-D-ribosyl)acetamidine + ATP = 5-amino-1-(5-phospho-beta-D-ribosyl)imidazole + ADP + phosphate + H(+). It functions in the pathway purine metabolism; IMP biosynthesis via de novo pathway; 5-amino-1-(5-phospho-D-ribosyl)imidazole from N(2)-formyl-N(1)-(5-phospho-D-ribosyl)glycinamide: step 2/2. This Actinobacillus pleuropneumoniae serotype 5b (strain L20) protein is Phosphoribosylformylglycinamidine cyclo-ligase.